Here is a 605-residue protein sequence, read N- to C-terminus: Progranulin (605 aa).

The signal sequence occupies residues 1–17 (MWTLVGWTILVAGLVAG). 2 disulfides stabilise this stretch: cysteine 126–cysteine 139 and cysteine 133–cysteine 149. The N-linked (GlcNAc...) asparagine glycan is linked to asparagine 197. Disulfide bonds link cysteine 297/cysteine 309, cysteine 303/cysteine 319, cysteine 310/cysteine 327, cysteine 320/cysteine 334, cysteine 328/cysteine 341, and cysteine 335/cysteine 348. Residues 359 to 386 (QKTPAQPSRPSQPSPPGPPGPPSPPGPL) form a disordered region. Residues 368-385 (PSQPSPPGPPGPPSPPGP) are compositionally biased toward pro residues. 2 disulfides stabilise this stretch: cysteine 392–cysteine 404 and cysteine 398–cysteine 414.

Belongs to the granulin family. Progranulin is secreted as a homodimer. Interacts with SLPI; interaction protects progranulin from proteolysis. Interacts (via region corresponding to granulin-7 peptide) with CTSD; stabilizes CTSD and increases its proteolytic activity. Interacts (via region corresponding to granulin-7 peptide) with SORT1; this interaction mediates endocytosis and lysosome delivery of progranulin; interaction occurs at the neuronal cell surface in a stressed nervous system. Interacts with PSAP; facilitates lysosomal delivery of progranulin from the extracellular space and the biosynthetic pathway. Forms a complex with PSAP and M6PR; PSAP bridges the binding between progranulin and M6PR. Forms a complex with PSAP and SORT1; progranulin bridges the interaction between PSAP and SORT1; facilitates lysosomal targeting of PSAP via SORT1; interaction enhances PSAP uptake in primary cortical neurons. Interacts (via regions corresponding to granulin-2 and granulin-7 peptides) with GBA1; this interaction prevents aggregation of GBA1-SCARB2 complex via interaction with HSPA1A upon stress. Interacts (via region corresponding to granulin-7 peptide) with HSPA1A; mediates recruitment of HSPA1A to GBA1 and prevents GBA1 aggregation in response to stress. In terms of processing, cleaved by ELANE; proteolysis is blocked by SLPI and is concentration- and time-dependent and induces CXCL8/IL-8 production; granulin-3 and granulin-4 are resistant to ELANE. Cleaved by CTSL in lysosome thus regulating the maturation and turnover of progranulin within the lysosome.

It is found in the secreted. The protein resides in the lysosome. Functionally, secreted protein that acts as a key regulator of lysosomal function and as a growth factor involved in inflammation, wound healing and cell proliferation. Regulates protein trafficking to lysosomes, and also the activity of lysosomal enzymes. Also facilitates the acidification of lysosomes, causing degradation of mature CTSD by CTSB. In addition, functions as a wound-related growth factor that acts directly on dermal fibroblasts and endothelial cells to promote division, migration and the formation of capillary-like tubule structures. Also promotes epithelial cell proliferation by blocking TNF-mediated neutrophil activation preventing release of oxidants and proteases. Moreover, modulates inflammation in neurons by preserving neurons survival, axonal outgrowth and neuronal integrity. In terms of biological role, inhibits epithelial cell proliferation and induces epithelial cells to secrete IL-8. Stabilizes CTSD through interaction with CTSD leading to maintain its aspartic-type peptidase activity. The sequence is that of Progranulin (GRN) from Cavia porcellus (Guinea pig).